The following is a 380-amino-acid chain: Queuine tRNA-ribosyltransferase (380 aa).

D96 (proton acceptor) is an active-site residue. Substrate is bound by residues 96–100, D150, Q193, and G220; that span reads DSGGF. An RNA binding region spans residues 251–257; it reads GVGAPDS. The Nucleophile role is filled by D270. The segment at 275 to 279 is RNA binding; important for wobble base 34 recognition; sequence TRIAR. Zn(2+) is bound by residues C308, C310, C313, and H339.

Belongs to the queuine tRNA-ribosyltransferase family. As to quaternary structure, homodimer. Within each dimer, one monomer is responsible for RNA recognition and catalysis, while the other monomer binds to the replacement base PreQ1. Requires Zn(2+) as cofactor.

The enzyme catalyses 7-aminomethyl-7-carbaguanine + guanosine(34) in tRNA = 7-aminomethyl-7-carbaguanosine(34) in tRNA + guanine. The protein operates within tRNA modification; tRNA-queuosine biosynthesis. Functionally, catalyzes the base-exchange of a guanine (G) residue with the queuine precursor 7-aminomethyl-7-deazaguanine (PreQ1) at position 34 (anticodon wobble position) in tRNAs with GU(N) anticodons (tRNA-Asp, -Asn, -His and -Tyr). Catalysis occurs through a double-displacement mechanism. The nucleophile active site attacks the C1' of nucleotide 34 to detach the guanine base from the RNA, forming a covalent enzyme-RNA intermediate. The proton acceptor active site deprotonates the incoming PreQ1, allowing a nucleophilic attack on the C1' of the ribose to form the product. After dissociation, two additional enzymatic reactions on the tRNA convert PreQ1 to queuine (Q), resulting in the hypermodified nucleoside queuosine (7-(((4,5-cis-dihydroxy-2-cyclopenten-1-yl)amino)methyl)-7-deazaguanosine). The chain is Queuine tRNA-ribosyltransferase from Streptococcus pyogenes serotype M6 (strain ATCC BAA-946 / MGAS10394).